The following is a 160-amino-acid chain: UPF0262 protein ELI_10965 (160 aa).

It belongs to the UPF0262 family.

This chain is UPF0262 protein ELI_10965, found in Erythrobacter litoralis (strain HTCC2594).